A 153-amino-acid polypeptide reads, in one-letter code: SKP1-like protein 9 (153 aa).

The tract at residues 95-153 (IKAANYLNIKSLFDLACQTVAEIIKGNTPEQIREFFNIENDLTPEEEAAIRRENKWAFE) is interaction with the F-box domain of F-box proteins.

This sequence belongs to the SKP1 family. Part of a SCF (SKP1-cullin-F-box) protein ligase complex. Interacts with CPR1/CPR30 and At3g61590. Expressed in leaves, shoot apical meristem (SAM), roots, flowers and pollen.

It is found in the nucleus. It functions in the pathway protein modification; protein ubiquitination. Its function is as follows. Involved in ubiquitination and subsequent proteasomal degradation of target proteins. Together with CUL1, RBX1 and a F-box protein, it forms a SCF E3 ubiquitin ligase complex. The functional specificity of this complex depends on the type of F-box protein. In the SCF complex, it serves as an adapter that links the F-box protein to CUL1. The chain is SKP1-like protein 9 (ASK9) from Arabidopsis thaliana (Mouse-ear cress).